A 431-amino-acid polypeptide reads, in one-letter code: uncharacterized protein (431 aa).

This is an uncharacterized protein from Acanthamoeba polyphaga (Amoeba).